Consider the following 406-residue polypeptide: MLKNKTFGSALIIAGTTIGAGMLAMPLTSAGMGFGYTLLLLVGLWALLVYSGLLFVEVYQTADQLDDGVATLAEKYFGVPGRIFATLSLLVLLYALSAAYITGGGSLLSGLPTAFGMEAMSLKTAIIIFTVVLGSFVVVGTKGVDGLTRVLFIGKLIAFAFVLFMMLPKVATDNLMALPLDYAFVVSAAPIFLTSFGFHVIMASVNSYLGGSVDKFRRAILIGTAIPLAAYLVWQLATHGVLSQSEFVRILQADPTLNGLVNATREITGSHFMGEVVRVFSSLALITSFLGVMLGVFEGLGDLFKRYHLPNNRFVLTIAAFLPPLVFALFYPEGFITALSYAGLLCAFYCLILPISLAWRTRIENPTLPYRVAGGNFALVLALLIGVVIMLIPFLIQWGYLPVVAG.

Helical transmembrane passes span phenylalanine 7–leucine 27, leucine 38–valine 58, isoleucine 83–glycine 103, alanine 119–valine 139, valine 150–valine 170, alanine 183–alanine 203, alanine 219–histidine 239, valine 279–glycine 299, phenylalanine 314–glycine 334, phenylalanine 335–isoleucine 355, and asparagine 376–isoleucine 396.

It belongs to the amino acid/polyamine transporter 2 family. Mtr/TnaB/TyrP permease subfamily.

The protein resides in the cell inner membrane. It carries out the reaction L-tyrosine(in) + H(+)(in) = L-tyrosine(out) + H(+)(out). Transports tyrosine across the cytoplasmic membrane. The transport system is energized by the proton motive force. The polypeptide is Tyrosine-specific transport system 2 (tyrP-B) (Haemophilus influenzae (strain ATCC 51907 / DSM 11121 / KW20 / Rd)).